A 118-amino-acid polypeptide reads, in one-letter code: Small ribosomal subunit protein uS13 (118 aa).

The tract at residues 94 to 118 (SLPLRGQRTKTNARTRKGPRKPIKK) is disordered.

This sequence belongs to the universal ribosomal protein uS13 family. In terms of assembly, part of the 30S ribosomal subunit. Forms a loose heterodimer with protein S19. Forms two bridges to the 50S subunit in the 70S ribosome.

Its function is as follows. Located at the top of the head of the 30S subunit, it contacts several helices of the 16S rRNA. In the 70S ribosome it contacts the 23S rRNA (bridge B1a) and protein L5 of the 50S subunit (bridge B1b), connecting the 2 subunits; these bridges are implicated in subunit movement. Contacts the tRNAs in the A and P-sites. This chain is Small ribosomal subunit protein uS13, found in Vibrio cholerae serotype O1 (strain ATCC 39315 / El Tor Inaba N16961).